Consider the following 446-residue polypeptide: Glutamyl-tRNA reductase (446 aa).

Substrate is bound by residues 49–52 (TCNR), Ser108, 113–115 (ETQ), and Gln119. Cys50 functions as the Nucleophile in the catalytic mechanism. Residue 188-193 (GAGKMS) coordinates NADP(+).

The protein belongs to the glutamyl-tRNA reductase family. Homodimer.

It carries out the reaction (S)-4-amino-5-oxopentanoate + tRNA(Glu) + NADP(+) = L-glutamyl-tRNA(Glu) + NADPH + H(+). The protein operates within porphyrin-containing compound metabolism; protoporphyrin-IX biosynthesis; 5-aminolevulinate from L-glutamyl-tRNA(Glu): step 1/2. In terms of biological role, catalyzes the NADPH-dependent reduction of glutamyl-tRNA(Glu) to glutamate 1-semialdehyde (GSA). The polypeptide is Glutamyl-tRNA reductase (Desulforudis audaxviator (strain MP104C)).